The sequence spans 73 residues: Protein SlyX homolog (73 aa).

This sequence belongs to the SlyX family.

In Histophilus somni (strain 129Pt) (Haemophilus somnus), this protein is Protein SlyX homolog.